A 275-amino-acid chain; its full sequence is Pyridoxal phosphate homeostasis protein (275 aa).

Phosphoserine is present on serine 6. Lysine 47 carries the N6-(pyridoxal phosphate)lysine modification. Residue tyrosine 69 is modified to Phosphotyrosine. An N6-succinyllysine modification is found at lysine 125. Residues serine 226 and serine 244 each carry the phosphoserine modification.

Belongs to the pyridoxal phosphate-binding protein YggS/PROSC family.

Its function is as follows. Pyridoxal 5'-phosphate (PLP)-binding protein, which may be involved in intracellular homeostatic regulation of pyridoxal 5'-phosphate (PLP), the active form of vitamin B6. The chain is Pyridoxal phosphate homeostasis protein from Pongo abelii (Sumatran orangutan).